We begin with the raw amino-acid sequence, 458 residues long: Transcription factor ORF10 (458 aa).

The zn(2)-C6 fungal-type DNA-binding region spans cysteine 38–cysteine 65. The segment at isoleucine 69 to valine 109 is disordered. Residues alanine 71–alanine 100 show a composition bias toward polar residues.

It localises to the nucleus. Its function is as follows. Transcription factor that specifically regulates the expression of the gene cluster that mediates the biosynthesis of PR-toxin, a bicyclic sesquiterpene belonging to the eremophilane class and acting as a mycotoxin. The polypeptide is Transcription factor ORF10 (Penicillium roqueforti (strain FM164)).